Consider the following 124-residue polypeptide: MARIAGVDLPRDKRIEAALPYIYGIGWSLSREILKKTGIDPDTRVRDLTEEQVAKLREVIDHEYKVEGDLQREVQMNIKRLIEIGCYRGLRHRRGLPVRGQRTKTNARTRKGPRRTVAGKKKAK.

The tract at residues 96–124 is disordered; sequence LPVRGQRTKTNARTRKGPRRTVAGKKKAK.

It belongs to the universal ribosomal protein uS13 family. Part of the 30S ribosomal subunit. Forms a loose heterodimer with protein S19. Forms two bridges to the 50S subunit in the 70S ribosome.

Located at the top of the head of the 30S subunit, it contacts several helices of the 16S rRNA. In the 70S ribosome it contacts the 23S rRNA (bridge B1a) and protein L5 of the 50S subunit (bridge B1b), connecting the 2 subunits; these bridges are implicated in subunit movement. Contacts the tRNAs in the A and P-sites. In Symbiobacterium thermophilum (strain DSM 24528 / JCM 14929 / IAM 14863 / T), this protein is Small ribosomal subunit protein uS13.